The sequence spans 481 residues: UDP-glucose 6-dehydrogenase 1 (481 aa).

NAD(+) is bound by residues 8 to 13, Asp33, Arg38, 86 to 90, 127 to 128, and Glu162; these read GAGYVG, VNTPT, and ST. Residues 158–162, 217–224, and 257–270 each bind substrate; these read EFLAE, KLAANAFL, and RIGAKFLNASVGFG. Residue Cys273 is the Nucleophile of the active site. Residue 273 to 276 participates in NAD(+) binding; it reads CFQK. 335–336 provides a ligand contact to substrate; that stretch reads FK. Arg343 provides a ligand contact to NAD(+). The residue at position 394 (Ser394) is a Phosphoserine. Residue Arg448 coordinates substrate.

It belongs to the UDP-glucose/GDP-mannose dehydrogenase family.

It catalyses the reaction UDP-alpha-D-glucose + 2 NAD(+) + H2O = UDP-alpha-D-glucuronate + 2 NADH + 3 H(+). Its pathway is nucleotide-sugar biosynthesis; UDP-alpha-D-glucuronate biosynthesis; UDP-alpha-D-glucuronate from UDP-alpha-D-glucose: step 1/1. Functionally, involved in the biosynthesis of UDP-glucuronic acid (UDP-GlcA), providing nucleotide sugars for cell-wall polymers. The chain is UDP-glucose 6-dehydrogenase 1 (UGD1) from Oryza sativa subsp. japonica (Rice).